The chain runs to 184 residues: MSTDKSPYAAFSALLASSGRDRSPAELHGQLLGRSCAGAGFEVDAWLADAADLLGGQIPDNVRQALIGLQEMVKGELTGGEVAVVLLLPSDEAPLAERAAALGQWCQGFLGGFGLAAGDRPLSAEAMEVLQDLAAISQVQSALEDSEEGEGAYMEVMEYLRVAPLLLFTECAGPVAPAPKPSVH.

Belongs to the UPF0149 family.

This chain is UPF0149 protein Avin_47340, found in Azotobacter vinelandii (strain DJ / ATCC BAA-1303).